Reading from the N-terminus, the 444-residue chain is Exodeoxyribonuclease 7 large subunit (444 aa).

Belongs to the XseA family. As to quaternary structure, heterooligomer composed of large and small subunits.

The protein localises to the cytoplasm. The catalysed reaction is Exonucleolytic cleavage in either 5'- to 3'- or 3'- to 5'-direction to yield nucleoside 5'-phosphates.. Its function is as follows. Bidirectionally degrades single-stranded DNA into large acid-insoluble oligonucleotides, which are then degraded further into small acid-soluble oligonucleotides. The chain is Exodeoxyribonuclease 7 large subunit from Aliivibrio salmonicida (strain LFI1238) (Vibrio salmonicida (strain LFI1238)).